We begin with the raw amino-acid sequence, 122 residues long: Replication factor A protein 3 (122 aa).

Belongs to the replication factor A protein 3 family. As to quaternary structure, component of the heterotrimeric canonical replication protein A complex (RPA). In terms of processing, the N-terminus is blocked.

The protein localises to the nucleus. In terms of biological role, as part of the replication protein A (RPA/RP-A), a single-stranded DNA-binding heterotrimeric complex, may play an essential role in DNA replication, recombination and repair. Binds and stabilizes single-stranded DNA intermediates, preventing complementary DNA reannealing and recruiting different proteins involved in DNA metabolism. Stimulates the activity of a cognate strand exchange protein (SEP1). The sequence is that of Replication factor A protein 3 (RFA3) from Saccharomyces cerevisiae (strain ATCC 204508 / S288c) (Baker's yeast).